The primary structure comprises 357 residues: Protein BMRF2 (357 aa).

Residues 1-11 (MFSCKQHLSLG) are Virion surface-facing. A transmembrane span lies at residues 12-32 (ACVFCLGLLASTPFIWCFVFA). The Virion surface portion of the chain corresponds to 33–46 (NLLSLEIFSPWQTH). Positions 47-67 (VYRLGFPTACLMAVLWTLVPA) form a transmembrane segment. Over 68–70 (KHA) the chain is Virion surface. Residues 71 to 91 (VRAVTPAIMLNIASALIFFSL) are membrane-embedded. Over 92-98 (RVYSTST) the chain is Virion surface. A transmembrane span lies at residues 99–121 (WVSAPCLFLANLPLLCLWPRLAI). The Virion surface segment spans residues 122–133 (EIVYICPAIHQR). A transmembrane helix spans residues 134-154 (FFELGLLLACTIFALSVVSRA). At 155 to 158 (LEVS) the chain is on the virion surface side. Positions 159-179 (AVFMSPFFIFLALGSGSLAGA) form a transmembrane segment. Residues 180–217 (RRNQIYTSGLERRRSIFCARGDHSVASLKETLHKCPWD) are Virion surface-facing. Positions 199 to 201 (RGD) match the Integrin binding site motif. Positions 218 to 238 (LLAISALTVLVVCVMIVLHVH) form a transmembrane segment. Topologically, residues 239 to 240 (AE) are virion surface. The hydrophobic stretch at 241–261 (VFFGLSRYLPLFLCGAMASGG) threads the membrane. The Virion surface segment spans residues 262-267 (LYLGHS). At 268–288 (SIIACVMATLCTLTSVVVYFL) the chain is embedded in the membrane. Residues 289–298 (HETLGPLGKT) lie on the Virion surface side of the membrane. A membrane pass occupies residues 299-319 (VLFISIFVYYFSGVAALSAAM). Topologically, residues 320 to 335 (RYKLKKFVNGPLVHLR) are virion surface. Residues 336–356 (VVYMCCFVFTFCEYLLVTFIK) are membrane-embedded. Position 357 (serine 357) is a topological domain, virion surface.

It belongs to the herpesviridae BMRF2 family. In terms of assembly, interacts with BDLF2. Interacts with host beta1 integrin family. In terms of processing, extensively glycosylated by O-linked oligosaccharides.

Its subcellular location is the virion membrane. It localises to the host cell membrane. Functionally, facilitates virus attachment to oral epithelial cells by binding to host beta1 integrin family. Participates in rearrangement of cellular actin to increase intercellular contacts by binding BDLF2 and thereby promote virus cell-to-cell spreading. The sequence is that of Protein BMRF2 from Homo sapiens (Human).